An 870-amino-acid chain; its full sequence is Leucine--tRNA ligase (870 aa).

The 'HIGH' region signature appears at 42 to 52 (PYPSGKLHMGH). The short motif at 629-633 (KMSKS) is the 'KMSKS' region element. Position 632 (Lys632) interacts with ATP.

It belongs to the class-I aminoacyl-tRNA synthetase family.

Its subcellular location is the cytoplasm. It catalyses the reaction tRNA(Leu) + L-leucine + ATP = L-leucyl-tRNA(Leu) + AMP + diphosphate. The chain is Leucine--tRNA ligase from Dechloromonas aromatica (strain RCB).